Consider the following 107-residue polypeptide: uncharacterized protein (107 aa).

A helical transmembrane segment spans residues 9-31; the sequence is AAAIITAPTILAMMSTVLRALIF.

Its subcellular location is the membrane. This is an uncharacterized protein from Archaeoglobus fulgidus (strain ATCC 49558 / DSM 4304 / JCM 9628 / NBRC 100126 / VC-16).